Reading from the N-terminus, the 411-residue chain is Secretion apparatus protein BsaZ (411 aa).

The next 4 helical transmembrane spans lie at 28 to 48 (IVALIVIATGALAAPALVDLT), 80 to 100 (IAAPFVLLCAAAGALPSLVQS), 137 to 157 (ALLYVGVFALTVRVFADLYHA), and 175 to 195 (IVLTVRLVLLFLLCALPVLIL). Positions 341 to 411 (AANRGGPPPE…APARTGDQNA (71 aa)) are disordered. Residues 370–404 (DACADNAFPDDAPPGAAAPNAGSPDSPAPDGGAPA) show a composition bias toward low complexity.

This sequence belongs to the type III secretion exporter family.

Its subcellular location is the cell membrane. Functionally, part of the bsa type III secretion system, is involved in the intracellular replication of invading bacteria inside the host cell. Probably necessary for the lysis of the vacuole membrane and escape into the host cell cytoplasm. The chain is Secretion apparatus protein BsaZ (bsaZ) from Burkholderia mallei (strain NCTC 10247).